The sequence spans 376 residues: Queuine tRNA-ribosyltransferase (376 aa).

The active-site Proton acceptor is the D93. Substrate-binding positions include 93–97, D147, Q190, and G217; that span reads DSGGF. Residues 248 to 254 form an RNA binding region; it reads GVGKPDD. The Nucleophile role is filled by D267. The Zn(2+) site is built by C305, C307, C310, and H336.

It belongs to the queuine tRNA-ribosyltransferase family. Homodimer. Within each dimer, one monomer is responsible for RNA recognition and catalysis, while the other monomer binds to the replacement base PreQ1. Zn(2+) serves as cofactor.

It catalyses the reaction 7-aminomethyl-7-carbaguanine + guanosine(34) in tRNA = 7-aminomethyl-7-carbaguanosine(34) in tRNA + guanine. It participates in tRNA modification; tRNA-queuosine biosynthesis. Its function is as follows. Catalyzes the base-exchange of a guanine (G) residue with the queuine precursor 7-aminomethyl-7-deazaguanine (PreQ1) at position 34 (anticodon wobble position) in tRNAs with GU(N) anticodons (tRNA-Asp, -Asn, -His and -Tyr). Catalysis occurs through a double-displacement mechanism. The nucleophile active site attacks the C1' of nucleotide 34 to detach the guanine base from the RNA, forming a covalent enzyme-RNA intermediate. The proton acceptor active site deprotonates the incoming PreQ1, allowing a nucleophilic attack on the C1' of the ribose to form the product. After dissociation, two additional enzymatic reactions on the tRNA convert PreQ1 to queuine (Q), resulting in the hypermodified nucleoside queuosine (7-(((4,5-cis-dihydroxy-2-cyclopenten-1-yl)amino)methyl)-7-deazaguanosine). This chain is Queuine tRNA-ribosyltransferase, found in Ruegeria pomeroyi (strain ATCC 700808 / DSM 15171 / DSS-3) (Silicibacter pomeroyi).